The chain runs to 429 residues: Chaperone SurA (429 aa).

The signal sequence occupies residues 1–18 (MFKRIALVCALFSGVCFA). 2 consecutive PpiC domains span residues 170–271 (NLTY…KLVA) and 281–380 (ITQT…EVIA).

Its subcellular location is the periplasm. It catalyses the reaction [protein]-peptidylproline (omega=180) = [protein]-peptidylproline (omega=0). In terms of biological role, chaperone involved in the correct folding and assembly of outer membrane proteins. Recognizes specific patterns of aromatic residues and the orientation of their side chains, which are found more frequently in integral outer membrane proteins. May act in both early periplasmic and late outer membrane-associated steps of protein maturation. In Legionella pneumophila (strain Lens), this protein is Chaperone SurA.